Consider the following 96-residue polypeptide: uncharacterized protein (96 aa).

The signal sequence occupies residues Met1 to Gly19. The N-linked (GlcNAc...) asparagine glycan is linked to Asn20. Low complexity predominate over residues Ala27–His46. A disordered region spans residues Ala27–Ser58. Gly residues predominate over residues Gly47–Gly56.

The protein resides in the secreted. This is an uncharacterized protein from Dictyostelium discoideum (Social amoeba).